The following is a 196-amino-acid chain: FMN-dependent NADH:quinone oxidoreductase (196 aa).

Position 10 (Ser10) interacts with FMN.

Belongs to the azoreductase type 1 family. As to quaternary structure, homodimer. It depends on FMN as a cofactor.

It catalyses the reaction 2 a quinone + NADH + H(+) = 2 a 1,4-benzosemiquinone + NAD(+). It carries out the reaction N,N-dimethyl-1,4-phenylenediamine + anthranilate + 2 NAD(+) = 2-(4-dimethylaminophenyl)diazenylbenzoate + 2 NADH + 2 H(+). Functionally, quinone reductase that provides resistance to thiol-specific stress caused by electrophilic quinones. In terms of biological role, also exhibits azoreductase activity. Catalyzes the reductive cleavage of the azo bond in aromatic azo compounds to the corresponding amines. This chain is FMN-dependent NADH:quinone oxidoreductase, found in Cereibacter sphaeroides (strain ATCC 17029 / ATH 2.4.9) (Rhodobacter sphaeroides).